The sequence spans 125 residues: Small ribosomal subunit protein eS8 (125 aa).

Belongs to the eukaryotic ribosomal protein eS8 family. As to quaternary structure, part of the 30S ribosomal subunit.

This Methanocorpusculum labreanum (strain ATCC 43576 / DSM 4855 / Z) protein is Small ribosomal subunit protein eS8.